A 460-amino-acid chain; its full sequence is Trigger factor (460 aa).

Residues Asp-166–Pro-245 form the PPIase FKBP-type domain. The interval Ala-434–Phe-460 is disordered. Residues Val-449–Phe-460 show a composition bias toward low complexity.

The protein belongs to the FKBP-type PPIase family. Tig subfamily.

The protein resides in the cytoplasm. The catalysed reaction is [protein]-peptidylproline (omega=180) = [protein]-peptidylproline (omega=0). Functionally, involved in protein export. Acts as a chaperone by maintaining the newly synthesized protein in an open conformation. Functions as a peptidyl-prolyl cis-trans isomerase. The chain is Trigger factor from Paenarthrobacter aurescens (strain TC1).